The following is a 504-amino-acid chain: D-alanine--D-alanyl carrier protein ligase (504 aa).

152 to 153 is an ATP binding site; sequence TS. D197 is a D-alanine binding site. 292–297 is a binding site for ATP; that stretch reads NTYGPT. V301 provides a ligand contact to D-alanine. Residues D383, 394-397, and K492 each bind ATP; that span reads YNGR. K492 is a binding site for D-alanine.

Belongs to the ATP-dependent AMP-binding enzyme family. DltA subfamily.

Its subcellular location is the cytoplasm. It catalyses the reaction holo-[D-alanyl-carrier protein] + D-alanine + ATP = D-alanyl-[D-alanyl-carrier protein] + AMP + diphosphate. Its pathway is cell wall biogenesis; lipoteichoic acid biosynthesis. Functionally, catalyzes the first step in the D-alanylation of lipoteichoic acid (LTA), the activation of D-alanine and its transfer onto the D-alanyl carrier protein (Dcp) DltC. In an ATP-dependent two-step reaction, forms a high energy D-alanyl-AMP intermediate, followed by transfer of the D-alanyl residue as a thiol ester to the phosphopantheinyl prosthetic group of the Dcp. D-alanylation of LTA plays an important role in modulating the properties of the cell wall in Gram-positive bacteria, influencing the net charge of the cell wall. The protein is D-alanine--D-alanyl carrier protein ligase of Bacillus cereus (strain G9842).